The sequence spans 191 residues: Ribonuclease HII (191 aa).

Residues 7–191 (ILMAGVDEVG…YSPVADLISK (185 aa)) form the RNase H type-2 domain. A divalent metal cation-binding residues include Asp13, Glu14, and Asp103.

The protein belongs to the RNase HII family. Requires Mn(2+) as cofactor. Mg(2+) is required as a cofactor.

The protein localises to the cytoplasm. The enzyme catalyses Endonucleolytic cleavage to 5'-phosphomonoester.. Functionally, endonuclease that specifically degrades the RNA of RNA-DNA hybrids. The protein is Ribonuclease HII of Legionella pneumophila (strain Paris).